The following is a 1237-amino-acid chain: MATSVKRKASETSDQNIVKVQKKHSTQDSTTDNGSKENDHSSQAINERTVPEQENDESDTSPESNEVATNTAATRHNGKVTATESYDIHIARETAELFKSNIFKLQIDELLEQVKLKQKHVLKVEKFLHKLYDILQEIPDWEEKSLAEVDSFFKNKIVSVPFVDPKPIPQNTNYKFNYKKPDISLIGSFALKAGIYQPNGSSIDTLLTMPKELFEKKDFLNFRCLHKRSVYLAYLTHHLLILLKKDKLDSFLQLEYSYFDNDPLLPILRISCSKPTGDSLSDYNFYKTRFSINLLIGFPYKVFEPKKLLPNRNCIRIAQESKEQSLPATPLYNFSVLSSSTHENYLKYLYKTKKQTESFVEATVLGRLWLQQRGFSSNMSHSGSLGGFGTFEFTILMAALLNGGGINSNKILLHGFSSYQLFKGVIKYLATMDLCHDGHLQFHSNPENSSSSPASKYIDEGFQTPTLFDKSTKVNILTKMTVSSYQILKEYAGETLRMLNNVVQDQFSNIFLTNISRFDNLKYDLCYDVQLPLGKYNNLETSLAATFGSMERVKFITLENFLAHKITNVARYALGDRIKYIQIEMVGQKSDFPITKRKVYSNTGGNHFNFDFVRVKLIVNPSECDKLVTKGPAHSETMSTEAAVFKNFWGIKSSLRRFKDGSITHCCVWSTSSSEPIISSIVNFALQKHVSKKAQISNETIKKFHNFLPLPNLPSSAKTSVLNLSSFFNLKKSFDDLYKIIFQMKLPLSVKSILPVGSAFRYTSLCQPVPFAYSDPDFFQDVILEFETSPKWPDEITSLEKAKTAFLLKIQEELSANSSTYRSFFSRDESIPYNLEIVTLNILTPEGYGFKFRVLTERDEILYLRAIANARNELKPELEATFLKFTAKYLASVRHTRTLENISHSYQFYSPVVRLFKRWLDTHLLLGHITDELAELIAIKPFVDPAPYFIPGSLENGFLKVLKFISQWNWKDDPLILDLVKPEDDIRDTFETSIGAGSELDSKTMKKLSERLTLAQYKGIQMNFTNLRNSDPNGTHLQFFVASKNDPSGILYSSGIPLPIATRLTALAKVAVNLLQTHGLNQQTINLLFTPGLKDYDFVVDLRTPIGLKSSCGILSATEFKNITNDQAPSNFPENLNDLSEKMDPTYQLVKYLNLKYKNSLILSSRKYIGVNGGEKGDKNVITGLIKPLFKGAHKFRVNLDCNVKPVDDENVILNKEAIFHEIAAFGNDMVINFETD.

The disordered stretch occupies residues 1-78 (MATSVKRKAS…TNTAATRHNG (78 aa)). Phosphoserine is present on residues S10 and S58. T60 carries the post-translational modification Phosphothreonine. Over residues 61-78 (SPESNEVATNTAATRHNG) the composition is skewed to polar residues. At S64 the chain carries Phosphoserine.

This sequence belongs to the NRAP family. In terms of assembly, interacts with snoRNA U3. Interacts with MPP10. Component of the ribosomal small subunit (SSU) processome composed of at least 40 protein subunits and snoRNA U3. Interacts with UBP10.

The protein localises to the nucleus. It is found in the nucleolus. Its function is as follows. Involved in nucleolar processing of pre-18S ribosomal RNA and ribosome assembly. In Saccharomyces cerevisiae (strain ATCC 204508 / S288c) (Baker's yeast), this protein is U3 small nucleolar RNA-associated protein 22 (UTP22).